The primary structure comprises 440 residues: Thymidine phosphorylase (440 aa).

It belongs to the thymidine/pyrimidine-nucleoside phosphorylase family. As to quaternary structure, homodimer.

It carries out the reaction thymidine + phosphate = 2-deoxy-alpha-D-ribose 1-phosphate + thymine. Its pathway is pyrimidine metabolism; dTMP biosynthesis via salvage pathway; dTMP from thymine: step 1/2. Its function is as follows. The enzymes which catalyze the reversible phosphorolysis of pyrimidine nucleosides are involved in the degradation of these compounds and in their utilization as carbon and energy sources, or in the rescue of pyrimidine bases for nucleotide synthesis. The protein is Thymidine phosphorylase of Salmonella choleraesuis (strain SC-B67).